The following is a 225-amino-acid chain: PKHD-type hydroxylase YbiX (225 aa).

In terms of domain architecture, Fe2OG dioxygenase spans Thr-78–Ser-177. Residues His-96, Asp-98, and His-158 each coordinate Fe cation. Arg-168 contributes to the 2-oxoglutarate binding site.

Fe(2+) serves as cofactor. It depends on L-ascorbate as a cofactor.

This Escherichia coli O6:H1 (strain CFT073 / ATCC 700928 / UPEC) protein is PKHD-type hydroxylase YbiX.